The primary structure comprises 238 residues: Uridylate kinase (238 aa).

Residue 12 to 15 participates in ATP binding; that stretch reads KLSG. G54 contributes to the UMP binding site. Positions 55 and 59 each coordinate ATP. Residues D74 and 135–142 each bind UMP; that span reads VGAPYFTT. T162, Y168, and D171 together coordinate ATP.

Belongs to the UMP kinase family. In terms of assembly, homohexamer.

Its subcellular location is the cytoplasm. It carries out the reaction UMP + ATP = UDP + ADP. The protein operates within pyrimidine metabolism; CTP biosynthesis via de novo pathway; UDP from UMP (UMPK route): step 1/1. Inhibited by UTP. Functionally, catalyzes the reversible phosphorylation of UMP to UDP. This is Uridylate kinase from Erythrobacter litoralis (strain HTCC2594).